The primary structure comprises 491 residues: Ketol-acid reductoisomerase (NADP(+)) (491 aa).

The region spanning 15 to 208 (AQLGKCRFMG…GGHRAGVLES (194 aa)) is the KARI N-terminal Rossmann domain. Residues 45–48 (CGAQ), Arg68, Arg76, Ser78, and 108–110 (DKQ) each bind NADP(+). His132 is a catalytic residue. Gly158 contacts NADP(+). 2 KARI C-terminal knotted domains span residues 209–344 (SFVA…TAPQ) and 345–484 (YEGK…MTDM). Residues Asp217, Glu221, Glu389, and Glu393 each coordinate Mg(2+). Ser414 is a binding site for substrate.

This sequence belongs to the ketol-acid reductoisomerase family. Mg(2+) is required as a cofactor.

It carries out the reaction (2R)-2,3-dihydroxy-3-methylbutanoate + NADP(+) = (2S)-2-acetolactate + NADPH + H(+). The catalysed reaction is (2R,3R)-2,3-dihydroxy-3-methylpentanoate + NADP(+) = (S)-2-ethyl-2-hydroxy-3-oxobutanoate + NADPH + H(+). It participates in amino-acid biosynthesis; L-isoleucine biosynthesis; L-isoleucine from 2-oxobutanoate: step 2/4. The protein operates within amino-acid biosynthesis; L-valine biosynthesis; L-valine from pyruvate: step 2/4. In terms of biological role, involved in the biosynthesis of branched-chain amino acids (BCAA). Catalyzes an alkyl-migration followed by a ketol-acid reduction of (S)-2-acetolactate (S2AL) to yield (R)-2,3-dihydroxy-isovalerate. In the isomerase reaction, S2AL is rearranged via a Mg-dependent methyl migration to produce 3-hydroxy-3-methyl-2-ketobutyrate (HMKB). In the reductase reaction, this 2-ketoacid undergoes a metal-dependent reduction by NADPH to yield (R)-2,3-dihydroxy-isovalerate. The polypeptide is Ketol-acid reductoisomerase (NADP(+)) (Shigella flexneri).